The primary structure comprises 63 residues: Large ribosomal subunit protein bL28 (63 aa).

The protein belongs to the bacterial ribosomal protein bL28 family.

The chain is Large ribosomal subunit protein bL28 from Clostridium botulinum (strain ATCC 19397 / Type A).